The chain runs to 432 residues: Gamma-glutamyl phosphate reductase (432 aa).

Belongs to the gamma-glutamyl phosphate reductase family.

The protein resides in the cytoplasm. The enzyme catalyses L-glutamate 5-semialdehyde + phosphate + NADP(+) = L-glutamyl 5-phosphate + NADPH + H(+). The protein operates within amino-acid biosynthesis; L-proline biosynthesis; L-glutamate 5-semialdehyde from L-glutamate: step 2/2. Catalyzes the NADPH-dependent reduction of L-glutamate 5-phosphate into L-glutamate 5-semialdehyde and phosphate. The product spontaneously undergoes cyclization to form 1-pyrroline-5-carboxylate. In Corynebacterium melassecola, this protein is Gamma-glutamyl phosphate reductase.